The chain runs to 924 residues: TBC1 domain family member 2A (924 aa).

Residues 1–38 (MEDTPERTPSSESIQPPGLAREPEVTSPGDSEGCARPL) form a disordered region. Residues 1-167 (MEDTPERTPS…TENGPTLHLK (167 aa)) form an interaction with CADH1 region. One can recognise a PH domain in the interval 42–140 (PKKLCGYLSK…WLQQLQMKRW (99 aa)). The segment at 228–296 (KQAQATAHGP…KRQSNTFPFF (69 aa)) is disordered. Positions 261–270 (IPEKEPEDPP) are enriched in basic and acidic residues. The interaction with RAC1 stretch occupies residues 297 to 435 (SDGLARSRTA…KLTEDLAQPQ (139 aa)). 3 coiled-coil regions span residues 303 to 332 (SRTA…ELVI), 361 to 418 (LELV…AKQQ), and 444 to 477 (FLSQ…QVTK). The region spanning 621–813 (GVPREHRPRV…RVWDAFLYEG (193 aa)) is the Rab-GAP TBC domain. Positions 871–906 (MKQLRQLRAAHRERLEAELRELELLKAEYLERRASR) form a coiled coil. Residue S916 is modified to Phosphoserine.

As to quaternary structure, interacts with activated RAC1 and CDH1.

It is found in the cytoplasm. The protein resides in the cytoplasmic vesicle. It localises to the cell junction. Functionally, acts as a GTPase-activating protein for RAB7A. Signal effector acting as a linker between RAC1 and RAB7A, leading to RAB7A inactivation and subsequent inhibition of cadherin degradation and reduced cell-cell adhesion. The polypeptide is TBC1 domain family member 2A (Tbc1d2) (Rattus norvegicus (Rat)).